The chain runs to 336 residues: Formimidoylglutamase (336 aa).

6 residues coordinate Mn(2+): H129, D160, H162, D164, D257, and D259.

The protein belongs to the arginase family. The cofactor is Mn(2+).

It carries out the reaction N-formimidoyl-L-glutamate + H2O = formamide + L-glutamate. It functions in the pathway amino-acid degradation; L-histidine degradation into L-glutamate; L-glutamate from N-formimidoyl-L-glutamate (hydrolase route): step 1/1. Its function is as follows. Catalyzes the conversion of N-formimidoyl-L-glutamate to L-glutamate and formamide. This chain is Formimidoylglutamase, found in Vibrio vulnificus (strain CMCP6).